The primary structure comprises 416 residues: Putative serine protease HhoB (416 aa).

An N-terminal signal peptide occupies residues 1 to 25 (MAIHLKASHLGVAVLLLLFGGAIGA). Polar residues predominate over residues 35-53 (GQNHSSPDSPVNTSPQSLT). Residues 35–57 (GQNHSSPDSPVNTSPQSLTPAPV) form a disordered region. The PDZ domain occupies 320-398 (EMTKQLRTSG…PLAIAVKRGQ (79 aa)).

It belongs to the peptidase S1C family.

A putative protease, its function overlaps that of the related putative proteases HtrA and HhoA. This chain is Putative serine protease HhoB (hhoB), found in Synechocystis sp. (strain ATCC 27184 / PCC 6803 / Kazusa).